We begin with the raw amino-acid sequence, 666 residues long: Long chain acyl-CoA synthetase 4 (666 aa).

228 to 239 (IMYTSGTTGDPK) contacts ATP. The interval 495–519 (DGWLHTGDVGEWQPDGSMKIIDRKK) is fatty acid-binding.

It belongs to the ATP-dependent AMP-binding enzyme family. Requires Mg(2+) as cofactor.

The enzyme catalyses a long-chain fatty acid + ATP + CoA = a long-chain fatty acyl-CoA + AMP + diphosphate. Its pathway is lipid metabolism; fatty acid metabolism. Activation of long-chain fatty acids for both synthesis of cellular lipids, and degradation via beta-oxidation. Preferentially uses palmitate, palmitoleate, oleate and linoleate. The protein is Long chain acyl-CoA synthetase 4 (LACS4) of Arabidopsis thaliana (Mouse-ear cress).